The sequence spans 378 residues: Pyrimidine monooxygenase RutA (378 aa).

FMN-binding positions include 65-66, N131, E140, 156-157, and S206; these read IK and RY.

It belongs to the NtaA/SnaA/DszA monooxygenase family. RutA subfamily.

It catalyses the reaction uracil + FMNH2 + NADH + O2 = (Z)-3-ureidoacrylate + FMN + NAD(+) + H2O + H(+). It carries out the reaction thymine + FMNH2 + NADH + O2 = (Z)-2-methylureidoacrylate + FMN + NAD(+) + H2O + H(+). Catalyzes the pyrimidine ring opening between N-3 and C-4 by an unusual flavin hydroperoxide-catalyzed mechanism, adding oxygen atoms in the process to yield ureidoacrylate peracid, that immediately reacts with FMN forming ureidoacrylate and FMN-N(5)-oxide. The FMN-N(5)-oxide reacts spontaneously with NADH to produce FMN. Requires the flavin reductase RutF to regenerate FMN in vivo. This chain is Pyrimidine monooxygenase RutA, found in Cronobacter turicensis (strain DSM 18703 / CCUG 55852 / LMG 23827 / z3032).